Consider the following 506-residue polypeptide: Lysine--tRNA ligase (506 aa).

Mg(2+) contacts are provided by Glu416 and Glu423.

Belongs to the class-II aminoacyl-tRNA synthetase family. In terms of assembly, homodimer. It depends on Mg(2+) as a cofactor.

Its subcellular location is the cytoplasm. It carries out the reaction tRNA(Lys) + L-lysine + ATP = L-lysyl-tRNA(Lys) + AMP + diphosphate. The sequence is that of Lysine--tRNA ligase from Pelotomaculum thermopropionicum (strain DSM 13744 / JCM 10971 / SI).